Consider the following 206-residue polypeptide: Ras-related protein Rab-18 (206 aa).

Methionine 1 is modified (N-acetylmethionine). Serine 17, glycine 20, lysine 21, serine 22, serine 23, aspartate 34, proline 35, threonine 40, glycine 66, lysine 123, and aspartate 125 together coordinate GTP. Serine 22 is a Mg(2+) binding site. Short sequence motifs (switch) lie at residues aspartate 31–phenylalanine 45 and aspartate 63–glycine 80. Threonine 40 contributes to the Mg(2+) binding site. Position 144 is a phosphoserine (serine 144). Alanine 152 provides a ligand contact to GTP. A lipid anchor (S-palmitoyl cysteine) is attached at cysteine 199. Cysteine 203 is modified (cysteine methyl ester). The S-geranylgeranyl cysteine moiety is linked to residue cysteine 203. Residues serine 204–leucine 206 constitute a propeptide, removed in mature form.

It belongs to the small GTPase superfamily. Rab family. Interacts (in GTP-bound form) with ZFYVE1. Interacts with ZW10 and this interaction is enhanced in the presence of ZFYVE1. Interacts with BSCL2. In terms of assembly, (Microbial infection) Interacts with Hepatitis C virus (HCV) non-structural protein 5A; this interaction may promote the association of NS5A and other viral replicase components with lipid droplets. Mg(2+) is required as a cofactor. In terms of tissue distribution, ubiquitous.

The protein resides in the endoplasmic reticulum membrane. It is found in the golgi apparatus. Its subcellular location is the cis-Golgi network membrane. The protein localises to the lipid droplet. It localises to the apical cell membrane. The enzyme catalyses GTP + H2O = GDP + phosphate + H(+). With respect to regulation, regulated by guanine nucleotide exchange factor (GEF) RAB3GAP1-RAB3GAP2 complex at the cis-Golgi membrane which promotes the exchange of bound GDP for free GTP. Regulated by GTPase activating protein (GAP) TBC1D20 at the ER membrane which increases the GTP hydrolysis activity. Inhibited by GDP dissociation inhibitors (GDIs) which prevent Rab-GDP dissociation. Functionally, the small GTPases Rab are key regulators of intracellular membrane trafficking, from the formation of transport vesicles to their fusion with membranes. Rabs cycle between an inactive GDP-bound form and an active GTP-bound form that is able to recruit to membranes different sets of downstream effectors directly responsible for vesicle formation, movement, tethering and fusion. RAB18 is required for the localization of ZFYVE1 to lipid droplets and for its function in mediating the formation of endoplasmic reticulum-lipid droplets (ER-LD) contacts. Also required for maintaining endoplasmic reticulum structure. Plays a role in apical endocytosis/recycling. Plays a key role in eye and brain development and neurodegeneration. This is Ras-related protein Rab-18 from Homo sapiens (Human).